A 131-amino-acid chain; its full sequence is D-ribose pyranase (131 aa).

Catalysis depends on His20, which acts as the Proton donor. Substrate contacts are provided by residues Asp28, His98, and 120–122 (FSN).

It belongs to the RbsD / FucU family. RbsD subfamily. Homodecamer.

The protein resides in the cytoplasm. The enzyme catalyses beta-D-ribopyranose = beta-D-ribofuranose. It participates in carbohydrate metabolism; D-ribose degradation; D-ribose 5-phosphate from beta-D-ribopyranose: step 1/2. In terms of biological role, catalyzes the interconversion of beta-pyran and beta-furan forms of D-ribose. The chain is D-ribose pyranase from Lactobacillus acidophilus (strain ATCC 700396 / NCK56 / N2 / NCFM).